Reading from the N-terminus, the 154-residue chain is Protein FasC (154 aa).

Belongs to the periplasmic pilus chaperone family.

Could be required for the biogenesis of a putative fimbria. This chain is Protein FasC (fasC), found in Escherichia coli.